A 284-amino-acid polypeptide reads, in one-letter code: Undecaprenyl-diphosphatase (284 aa).

8 helical membrane-spanning segments follow: residues I7–L27, E44–H64, L90–D110, F116–I136, V167–I187, F197–F217, F229–F249, and F259–F279.

This sequence belongs to the UppP family.

The protein localises to the cell membrane. It catalyses the reaction di-trans,octa-cis-undecaprenyl diphosphate + H2O = di-trans,octa-cis-undecaprenyl phosphate + phosphate + H(+). In terms of biological role, catalyzes the dephosphorylation of undecaprenyl diphosphate (UPP). Confers resistance to bacitracin. In Lactococcus lactis subsp. cremoris (strain MG1363), this protein is Undecaprenyl-diphosphatase.